A 148-amino-acid chain; its full sequence is Protoporphyrinogen IX oxidase (148 aa).

4 helical membrane passes run Tyr7–Phe27, Ser58–Ile78, Gly86–Cys106, and Phe128–Phe148. His15 is a binding site for heme. Lys92 is a heme binding site.

Belongs to the HemJ family. As to quaternary structure, homodimer. Heme b is required as a cofactor.

Its subcellular location is the cell membrane. It catalyses the reaction protoporphyrinogen IX + 3 A = protoporphyrin IX + 3 AH2. It participates in porphyrin-containing compound metabolism; protoporphyrin-IX biosynthesis; protoporphyrin-IX from protoporphyrinogen-IX: step 1/1. Functionally, catalyzes the oxidation of protoporphyrinogen IX to protoporphyrin IX. Is involved in the biosynthesis of tetrapyrrole molecules like heme. Does not use oxygen or artificial electron acceptors such as menadione or benzoquinone. In Helicobacter pylori (strain ATCC 700392 / 26695) (Campylobacter pylori), this protein is Protoporphyrinogen IX oxidase.